We begin with the raw amino-acid sequence, 105 residues long: Phosphoribosyl-ATP pyrophosphatase (105 aa).

It belongs to the PRA-PH family.

The protein localises to the cytoplasm. It catalyses the reaction 1-(5-phospho-beta-D-ribosyl)-ATP + H2O = 1-(5-phospho-beta-D-ribosyl)-5'-AMP + diphosphate + H(+). The protein operates within amino-acid biosynthesis; L-histidine biosynthesis; L-histidine from 5-phospho-alpha-D-ribose 1-diphosphate: step 2/9. This chain is Phosphoribosyl-ATP pyrophosphatase, found in Vesicomyosocius okutanii subsp. Calyptogena okutanii (strain HA).